A 247-amino-acid polypeptide reads, in one-letter code: tRNA pseudouridine synthase A (247 aa).

Residue Asp52 is the Nucleophile of the active site. Tyr113 contributes to the substrate binding site.

This sequence belongs to the tRNA pseudouridine synthase TruA family. Homodimer.

The enzyme catalyses uridine(38/39/40) in tRNA = pseudouridine(38/39/40) in tRNA. Its function is as follows. Formation of pseudouridine at positions 38, 39 and 40 in the anticodon stem and loop of transfer RNAs. This Bartonella tribocorum (strain CIP 105476 / IBS 506) protein is tRNA pseudouridine synthase A.